The chain runs to 495 residues: N-succinylglutamate 5-semialdehyde dehydrogenase (495 aa).

Residue 220–225 participates in NAD(+) binding; sequence GSAGTG. Catalysis depends on residues Glu243 and Cys277.

The protein belongs to the aldehyde dehydrogenase family. AstD subfamily.

The enzyme catalyses N-succinyl-L-glutamate 5-semialdehyde + NAD(+) + H2O = N-succinyl-L-glutamate + NADH + 2 H(+). Its pathway is amino-acid degradation; L-arginine degradation via AST pathway; L-glutamate and succinate from L-arginine: step 4/5. In terms of biological role, catalyzes the NAD-dependent reduction of succinylglutamate semialdehyde into succinylglutamate. The polypeptide is N-succinylglutamate 5-semialdehyde dehydrogenase (Enterobacter sp. (strain 638)).